The primary structure comprises 102 residues: Urease subunit beta (102 aa).

The protein belongs to the urease beta subunit family. As to quaternary structure, heterotrimer of UreA (gamma), UreB (beta) and UreC (alpha) subunits. Three heterotrimers associate to form the active enzyme.

The protein resides in the cytoplasm. It catalyses the reaction urea + 2 H2O + H(+) = hydrogencarbonate + 2 NH4(+). It functions in the pathway nitrogen metabolism; urea degradation; CO(2) and NH(3) from urea (urease route): step 1/1. The polypeptide is Urease subunit beta (Opitutus terrae (strain DSM 11246 / JCM 15787 / PB90-1)).